The chain runs to 326 residues: Transmembrane protein 255B (326 aa).

A run of 4 helical transmembrane segments spans residues 26–46 (LWFVGSLLLVSVLIVTVGLAA), 55–75 (VGGYYPGIILGFGSFLGIIGI), 85–105 (LVAAIVFISFGVVAAFCCAIV), and 200–220 (AVLNVLGLFLGIITAAVLGAF). Residues 284–326 (LASSEDLQPPSPSSSGSGLPGQAPPCYAPTYFPPGEKPPPYAP) are disordered. A compositionally biased stretch (pro residues) spans 305–326 (QAPPCYAPTYFPPGEKPPPYAP).

This sequence belongs to the TMEM255 family.

The protein resides in the membrane. The protein is Transmembrane protein 255B (TMEM255B) of Homo sapiens (Human).